The sequence spans 487 residues: N-succinylglutamate 5-semialdehyde dehydrogenase (487 aa).

Position 221–226 (221–226) interacts with NAD(+); that stretch reads GSSDTG. Active-site residues include glutamate 244 and cysteine 278.

It belongs to the aldehyde dehydrogenase family. AstD subfamily.

The catalysed reaction is N-succinyl-L-glutamate 5-semialdehyde + NAD(+) + H2O = N-succinyl-L-glutamate + NADH + 2 H(+). Its pathway is amino-acid degradation; L-arginine degradation via AST pathway; L-glutamate and succinate from L-arginine: step 4/5. Functionally, catalyzes the NAD-dependent reduction of succinylglutamate semialdehyde into succinylglutamate. This Burkholderia thailandensis (strain ATCC 700388 / DSM 13276 / CCUG 48851 / CIP 106301 / E264) protein is N-succinylglutamate 5-semialdehyde dehydrogenase.